A 314-amino-acid chain; its full sequence is Atrochrysone carboxyl ACP thioesterase AgnL7 (314 aa).

His103, His105, Asp107, and His108 together coordinate Zn(2+). Catalysis depends on Asp107, which acts as the Proton donor/acceptor.

This sequence belongs to the metallo-beta-lactamase superfamily. It depends on Zn(2+) as a cofactor.

The catalysed reaction is atrochrysone carboxyl-[ACP] + H2O = atrochrysone carboxylate + holo-[ACP] + H(+). It functions in the pathway secondary metabolite biosynthesis. Functionally, atrochrysone carboxyl ACP thioesterase; part of the gene cluster that mediates the biosynthesis of agnestins, dihydroxy-xanthone metabolites. The pathway begins with the assembly and cyclization of atrochrysone thioester by the non-reducing polyketide synthase Agnpks1. The atrochrysone carboxyl ACP thioesterase AgnL7 then breaks the thioester bond and releases the atrochrysone carboxylic acid as the first enzyme-free intermediate. The decarboxylase AgnL1 then catalyzes the concerted decarboxylation-elimination required to convert atochrysone carboxylic acid into emodin anthrone, which is further oxidized to emodin by the anthrone oxygenase AgnL2. Emodin then undergoes reduction catalyzed by the oxidoreductase AgnL4 to yield the dihydroquinone tautomer which is the substrate for reduction by the short chain dehydrogenase AgnL6 reduction to produce hydroxyketone, followed by AgnL8 dehydration and likely spontaneous autoxidation to chrysophanol. Baeyer-Villiger oxidation by the oxidase AgnL3 leads to monodictyphenone via cleavage of the C-10/C-10a bond of chrysophanol. Alternative cleavage at the C-4a/C-10 bond of chrysophanol also leads to the formation some cephalone F. Further conversion to agnestins A and B, requires reduction to dihydro-monodictyphenone, oxidation to agnestin C probably via an epoxide, and rearrangement to either agnestin A or agnestin B directly, although agnestin A or agnestin B can also interconvert. Within the cluster, AgnR1 is the only unassigned oxidoreductase present which could be involved in this conversion. However, AgnR1 seems not to be involved in this step, and thus genes involved in the proposed oxidation/reduction may be located elsewhere on the genome. Further agnestin A derivatives are probably formed by spontaneous decarboxylations, dehydrations and methanolysis reactions. The chain is Atrochrysone carboxyl ACP thioesterase AgnL7 from Paecilomyces divaricatus (Penicillium divaricatum).